Here is a 465-residue protein sequence, read N- to C-terminus: MQHIHFDAIVIGSGPGGEGAAMGLVKQGKSVAVIERYNNVGGGCTHWGTIPSKALRHAVSRIIEFNQNPLYSDNSRVLRSSFAEILRRAEMVINQQTRMRQGFYERNGCRMFSGEATFIDDHRVSVRYADDNHDILSADKIIIATGSRPYCPPDVDFTHSRIYNSDSILKLDHEPRHVIIYGAGVIGCEYASIFRGLGVKVDLINTRNHLLAFLDQEMSDALSYHFWNSGIVIRHNEEYSKIEGVDDGVIVHLKSGKKVKADCLLYANGRTGNTDTLGLKNVGLEADSRGLLKVNKIYQTSNENIYAVGDVIGYPSLASAAYDQGRIAAQAMTKGNAEVHLIEDIPTGIYTIPEISSVGKTEQQLTAMKVPYEVGRAQFKHLARAQIAGMNVGSLKILFHRETKEILGIHCFGERAAEIIHIGQAIMEQKGESNTIEYFVNTTFNYPTMAEAYRVAALNGLNRLF.

Glu-35–Cys-44 contributes to the FAD binding site.

This sequence belongs to the class-I pyridine nucleotide-disulfide oxidoreductase family. FAD is required as a cofactor.

It is found in the cytoplasm. The catalysed reaction is NAD(+) + NADPH = NADH + NADP(+). Functionally, conversion of NADPH, generated by peripheral catabolic pathways, to NADH, which can enter the respiratory chain for energy generation. In Photorhabdus laumondii subsp. laumondii (strain DSM 15139 / CIP 105565 / TT01) (Photorhabdus luminescens subsp. laumondii), this protein is Soluble pyridine nucleotide transhydrogenase.